Here is a 503-residue protein sequence, read N- to C-terminus: Serine/threonine-protein kinase chk-1 (503 aa).

The Protein kinase domain occupies 24–286 (YRVVQTLGEG…IEQIQADPWY (263 aa)). ATP-binding positions include 30–38 (LGEGAFGEV) and K54. The Proton acceptor role is filled by D150. The interval 320–346 (SAKRRHLETPNEKSTLAERQNASFSQP) is disordered. Positions 331-346 (EKSTLAERQNASFSQP) are enriched in polar residues. Residue S344 is modified to Phosphoserine.

It belongs to the protein kinase superfamily. CAMK Ser/Thr protein kinase family. NIM1 subfamily. As to expression, expressed in the germline.

It is found in the cytoplasm. Its subcellular location is the nucleus. It localises to the perinuclear region. It catalyses the reaction L-seryl-[protein] + ATP = O-phospho-L-seryl-[protein] + ADP + H(+). It carries out the reaction L-threonyl-[protein] + ATP = O-phospho-L-threonyl-[protein] + ADP + H(+). Its function is as follows. Serine/threonine-protein kinase which is required for checkpoint-mediated cell cycle arrest and activation of DNA repair in response to the presence of DNA damage or unreplicated DNA. May also negatively regulate cell cycle progression during unperturbed cell cycles. Required for checkpoint mediated cell cycle arrest in response to DNA damage in germline cells. Delays cell-cycle reentry of the Z2 and Z3 primordial germ cells in response to transcription-induced DNA damage as they emerge from cell cycle arrest in L1 larvae. Essential for embryogenesis. This is Serine/threonine-protein kinase chk-1 from Caenorhabditis elegans.